We begin with the raw amino-acid sequence, 108 residues long: Small ribosomal subunit protein bS6 (108 aa).

It belongs to the bacterial ribosomal protein bS6 family.

Functionally, binds together with bS18 to 16S ribosomal RNA. The polypeptide is Small ribosomal subunit protein bS6 (Trichormus variabilis (strain ATCC 29413 / PCC 7937) (Anabaena variabilis)).